An 84-amino-acid chain; its full sequence is MSILSFLLGEKKKTASVAKERLQIILAHERSSHSAPADYLPALQRELVAVISKYVKIGNDDIKVNLERQDNLEVLEVKIEIPQA.

It belongs to the MinE family.

Functionally, prevents the cell division inhibition by proteins MinC and MinD at internal division sites while permitting inhibition at polar sites. This ensures cell division at the proper site by restricting the formation of a division septum at the midpoint of the long axis of the cell. The sequence is that of Cell division topological specificity factor from Ralstonia nicotianae (strain ATCC BAA-1114 / GMI1000) (Ralstonia solanacearum).